We begin with the raw amino-acid sequence, 368 residues long: Phospho-N-acetylmuramoyl-pentapeptide-transferase (368 aa).

10 helical membrane passes run 32 to 52, 79 to 99, 102 to 122, 140 to 160, 176 to 196, 207 to 227, 247 to 267, 271 to 291, 296 to 316, and 345 to 365; these read TGGA…WIID, TPTM…VLWA, LNPY…IGFY, TRLL…IRLG, VVVD…VGAG, GLAI…AYLA, LAVL…FNAP, IFMG…IAVA, IVLA…IVQV, and QIVI…LSTL.

The protein belongs to the glycosyltransferase 4 family. MraY subfamily. Requires Mg(2+) as cofactor.

The protein localises to the cell inner membrane. It carries out the reaction UDP-N-acetyl-alpha-D-muramoyl-L-alanyl-gamma-D-glutamyl-meso-2,6-diaminopimeloyl-D-alanyl-D-alanine + di-trans,octa-cis-undecaprenyl phosphate = di-trans,octa-cis-undecaprenyl diphospho-N-acetyl-alpha-D-muramoyl-L-alanyl-D-glutamyl-meso-2,6-diaminopimeloyl-D-alanyl-D-alanine + UMP. The protein operates within cell wall biogenesis; peptidoglycan biosynthesis. Its function is as follows. Catalyzes the initial step of the lipid cycle reactions in the biosynthesis of the cell wall peptidoglycan: transfers peptidoglycan precursor phospho-MurNAc-pentapeptide from UDP-MurNAc-pentapeptide onto the lipid carrier undecaprenyl phosphate, yielding undecaprenyl-pyrophosphoryl-MurNAc-pentapeptide, known as lipid I. This chain is Phospho-N-acetylmuramoyl-pentapeptide-transferase, found in Nitrobacter hamburgensis (strain DSM 10229 / NCIMB 13809 / X14).